The chain runs to 186 residues: UPF0301 protein Nmul_A2478 (186 aa).

Belongs to the UPF0301 (AlgH) family.

This Nitrosospira multiformis (strain ATCC 25196 / NCIMB 11849 / C 71) protein is UPF0301 protein Nmul_A2478.